The primary structure comprises 587 residues: ASI1-immunoprecipitated protein 3 (587 aa).

Residues 1 to 118 form a disordered region; that stretch reads MVLSRRFAQV…NVTGKGKGKR (118 aa). Acidic residues predominate over residues 66–98; sequence EDEDMAEGDDDQAEEETNPEAEEEEDEEEEEKP. One can recognise a BAH domain in the interval 129–248; it reads NTYDLEVPVL…TVEKKLWKLT (120 aa). The 150-residue stretch at 344–493 folds into the TFIIS central domain; it reads HRDKCLGKLL…RMQMTSVRCS (150 aa). Disordered regions lie at residues 371-396 and 539-587; these read EAKV…GKDE and TDKP…KKPE. Positions 560–570 are enriched in basic and acidic residues; sequence ETNKPKDEALK. A compositionally biased stretch (polar residues) spans 571 to 581; the sequence is TNDSNADNNPE.

In terms of assembly, interacts with MOM1. Component of the ASI1-AIPP1-EDM2 (AAE) RNA regulatory complex composed of at least AIPP1/EDM3, ASI1 and EDM2 and may contain CPL2, AIPP2 and AIPP3/BDT1. Part of the BAH-PHD bivalent histone reader complex that contains AIPP2, PAIPP2 and AIPP3/BDT1; the BAH-PHD module associates with CPL2 to form the BAH-PHD-CPL2 complex (BPC) for transcriptional repression. Binds directly to CPL2, PHD1, PAIPP2/PHD2, AIPP2/PHD3, PHD4, PHD5 and PHD6. Expressed ubiquitously.

It localises to the nucleus. Its function is as follows. Transcriptional repressor. Together with PHD finger-containing proteins (e.g. PHD1, PAIPP2/PHD2, AIPP2/PHD3, PHD4, PHD5 and PHD6), cooperates to form a BAH-PHD bivalent histone reader complex able to read histone H3 lysine 27 trimethylation (H3K27me3) and low-methylated H3K4 histone marks in order to regulate transcription, especially to prevent early flowering; H3K27me3 reader of this complex. CPL2 is subsequently recruited to form a BAH-PHD-CPL2 complex (BPC) in order to silence several H3K27me3 and low-methylated H3K4 enriched loci, including AGO5, via the phosphorylation state-dependent inhibition of Pol II release from the transcriptional start site (e.g. Ser5P-Pol II dephosphorylation). The BPC complex represses flowering by inhibiting the expression of several genes, including AGL6, FT, FUL and SOC1. Prevents the accumulation of intronic heterochromatin-containing genes (e.g. IBM1, At3g05410 and RPP7). Seems to not be involved in vernalization establishment, by contrast to orthologs in grass plants. The chain is ASI1-immunoprecipitated protein 3 from Arabidopsis thaliana (Mouse-ear cress).